A 953-amino-acid chain; its full sequence is Communesin biosynthesis cluster-specific transcription factor cnsN (953 aa).

Positions 371–418 are disordered; sequence ELESTSPRTSHSSLSQDDTASLHSRSSLSSSPGRFPPSQKLVATSDSP. Residues 374 to 408 are compositionally biased toward low complexity; it reads STSPRTSHSSLSQDDTASLHSRSSLSSSPGRFPPS.

Its subcellular location is the nucleus. Its function is as follows. Transcriptional regulator; part of the gene cluster that mediates the biosynthesis of communesins, a prominent class of indole alkaloids with great potential as pharmaceuticals. This chain is Communesin biosynthesis cluster-specific transcription factor cnsN, found in Penicillium expansum (Blue mold rot fungus).